The sequence spans 205 residues: Protein Nef (205 aa).

Gly-2 carries N-myristoyl glycine; by host lipidation. Phosphoserine; by host is present on Ser-6. The interval 62–65 (DNEE) is acidic; interacts with host PACS1 and PACS2; stabilizes the interaction of NEF/MHC-I with host AP1M1; necessary for MHC-I internalization. Positions 69-78 (PVRPQVPTRP) are SH3-binding; interaction with Src family tyrosine kinases. The PxxP; stabilizes the interaction of NEF/MHC-I with host AP1M1; necessary for MHC-I internalization motif lies at 72 to 75 (PQVP). Positions 108–124 (EILDLWVYHTQGFFPDW) are mediates dimerization, Nef-PTE1 interaction. Residues 148–180 (LTEEQVEQANEGDNNCLLHPICQHGMEDEDKEV) form a binding to ATP6V1H region. Residues 164–165 (LL) carry the Dileucine internalization motif; necessary for CD4 internalization motif. The Diacidic; necessary for CD4 internalization motif lies at 174–175 (ED).

This sequence belongs to the lentivirus primate group Nef protein family. In terms of assembly, monomer; cytosolic form. Homodimer; membrane bound form. Interacts with Nef associated p21-activated kinase (PAK2); this interaction activates PAK2. Associates with the Nef-MHC-I-AP1 complex; this complex is required for MHC-I internalization. Interacts (via C-terminus) with host PI3-kinase. Interacts with host PACS1; this interaction seems to be weak. Interacts with host PACS2. Interacts with host LCK and MAPK3; these interactions inhibit the kinase activity of the latter. Interacts with host ATP6V1H; this interaction may play a role in CD4 endocytosis. Associates with the CD4-Nef-AP2 complex; this complex is required for CD4 internalization. Interacts with host AP2 subunit alpha and AP2 subunit sigma2. Interacts with TCR-zeta chain; this interaction up-regulates the Fas ligand (FasL) surface expression. Interacts with host HCK, LYN, and SRC; these interactions activate the Src family kinases. Interacts with MAP3K5; this interaction inhibits the Fas and TNFR-mediated death signals. Interacts with beta-COP and PTE1. Interacts with human RACK1; this increases Nef phosphorylation by PKC. Interacts with TP53; this interaction decreases the half-life of TP53, protecting the infected cell against p53-mediated apoptosis. The virion-associated Nef proteins are cleaved by the viral protease to release the soluble C-terminal core protein. Nef is probably cleaved concomitantly with viral structural proteins on maturation of virus particles. In terms of processing, myristoylated. Post-translationally, phosphorylated on serine residues, probably by host PKCdelta and theta.

The protein localises to the host cell membrane. It is found in the virion. It localises to the secreted. Its subcellular location is the host Golgi apparatus membrane. Factor of infectivity and pathogenicity, required for optimal virus replication. Alters numerous pathways of T-lymphocyte function and down-regulates immunity surface molecules in order to evade host defense and increase viral infectivity. Alters the functionality of other immunity cells, like dendritic cells, monocytes/macrophages and NK cells. In terms of biological role, in infected CD4(+) T-lymphocytes, down-regulates the surface MHC-I, mature MHC-II, CD4, CD28, CCR5 and CXCR4 molecules. Mediates internalization and degradation of host CD4 through the interaction of with the cytoplasmic tail of CD4, the recruitment of AP-2 (clathrin adapter protein complex 2), internalization through clathrin coated pits, and subsequent transport to endosomes and lysosomes for degradation. Diverts host MHC-I molecules to the trans-Golgi network-associated endosomal compartments by an endocytic pathway to finally target them for degradation. MHC-I down-regulation may involve AP-1 (clathrin adapter protein complex 1) or possibly Src family kinase-ZAP70/Syk-PI3K cascade recruited by PACS2. In consequence infected cells are masked for immune recognition by cytotoxic T-lymphocytes. Decreasing the number of immune receptors also prevents reinfection by more HIV particles (superinfection). Down-regulates host SERINC3 and SERINC5 thereby excluding these proteins from the viral particles. Virion infectivity is drastically higher when SERINC3 or SERINC5 are excluded from the viral envelope, because these host antiviral proteins impair the membrane fusion event necessary for subsequent virion penetration. Its function is as follows. Bypasses host T-cell signaling by inducing a transcriptional program nearly identical to that of anti-CD3 cell activation. Interaction with TCR-zeta chain up-regulates the Fas ligand (FasL). Increasing surface FasL molecules and decreasing surface MHC-I molecules on infected CD4(+) cells send attacking cytotoxic CD8+ T-lymphocytes into apoptosis. Functionally, plays a role in optimizing the host cell environment for viral replication without causing cell death by apoptosis. Protects the infected cells from apoptosis in order to keep them alive until the next virus generation is ready to strike. Inhibits the Fas and TNFR-mediated death signals by blocking MAP3K5/ASK1. Decreases the half-life of TP53, protecting the infected cell against p53-mediated apoptosis. Inhibits the apoptotic signals regulated by the Bcl-2 family proteins through the formation of a Nef/PI3-kinase/PAK2 complex that leads to activation of PAK2 and induces phosphorylation of host BAD. Extracellular Nef protein targets CD4(+) T-lymphocytes for apoptosis by interacting with CXCR4 surface receptors. The sequence is that of Protein Nef from Simian immunodeficiency virus (isolate CPZ GAB1) (SIV-cpz).